Here is a 207-residue protein sequence, read N- to C-terminus: ATP synthase subunit b 2 (207 aa).

Residues threonine 53–methionine 72 traverse the membrane as a helical segment.

This sequence belongs to the ATPase B chain family. In terms of assembly, F-type ATPases have 2 components, F(1) - the catalytic core - and F(0) - the membrane proton channel. F(1) has five subunits: alpha(3), beta(3), gamma(1), delta(1), epsilon(1). F(0) has three main subunits: a(1), b(2) and c(10-14). The alpha and beta chains form an alternating ring which encloses part of the gamma chain. F(1) is attached to F(0) by a central stalk formed by the gamma and epsilon chains, while a peripheral stalk is formed by the delta and b chains.

The protein localises to the cell inner membrane. Its function is as follows. F(1)F(0) ATP synthase produces ATP from ADP in the presence of a proton or sodium gradient. F-type ATPases consist of two structural domains, F(1) containing the extramembraneous catalytic core and F(0) containing the membrane proton channel, linked together by a central stalk and a peripheral stalk. During catalysis, ATP synthesis in the catalytic domain of F(1) is coupled via a rotary mechanism of the central stalk subunits to proton translocation. In terms of biological role, component of the F(0) channel, it forms part of the peripheral stalk, linking F(1) to F(0). The b'-subunit is a diverged and duplicated form of b found in plants and photosynthetic bacteria. The polypeptide is ATP synthase subunit b 2 (atpF2) (Rhizobium etli (strain CIAT 652)).